A 131-amino-acid chain; its full sequence is MPTAKFVVADPKTGRCYQIEADNTPLVGKKIGEVFDGKIIGLEGYKLQIRGGTDSSGFPMRPDIHGSRKVRVLLSAPPGFKPKRKGERRRKTVRGNTIAPDIVQINVKVVEYGEKSIPELLGLEGGENQEQ.

Positions 76-95 are disordered; that stretch reads APPGFKPKRKGERRRKTVRG. Basic residues predominate over residues 81–93; the sequence is KPKRKGERRRKTV.

The protein belongs to the eukaryotic ribosomal protein eS6 family.

In Methanocaldococcus jannaschii (strain ATCC 43067 / DSM 2661 / JAL-1 / JCM 10045 / NBRC 100440) (Methanococcus jannaschii), this protein is Small ribosomal subunit protein eS6.